A 470-amino-acid polypeptide reads, in one-letter code: Uronate isomerase (470 aa).

This sequence belongs to the metallo-dependent hydrolases superfamily. Uronate isomerase family.

The catalysed reaction is D-glucuronate = D-fructuronate. It catalyses the reaction aldehydo-D-galacturonate = keto-D-tagaturonate. The protein operates within carbohydrate metabolism; pentose and glucuronate interconversion. This is Uronate isomerase from Salmonella newport (strain SL254).